The sequence spans 130 residues: Small ribosomal subunit protein uS8 (130 aa).

It belongs to the universal ribosomal protein uS8 family. In terms of assembly, part of the 30S ribosomal subunit.

In terms of biological role, one of the primary rRNA binding proteins, it binds directly to 16S rRNA central domain where it helps coordinate assembly of the platform of the 30S subunit. This is Small ribosomal subunit protein uS8 from Methanobrevibacter smithii (strain ATCC 35061 / DSM 861 / OCM 144 / PS).